A 293-amino-acid chain; its full sequence is Probable tRNA-splicing endonuclease subunit Sen2 (293 aa).

Catalysis depends on residues tyrosine 157, histidine 165, and lysine 204. A helical membrane pass occupies residues 267 to 287 (VVFNHWGVILGFTVLSGLLVY).

This sequence belongs to the tRNA-intron endonuclease family. As to quaternary structure, tRNA splicing endonuclease is a heterotetramer composed of SEN2, SEN15, SEN34/LENG5 and SEN54.

It localises to the nucleus. It is found in the membrane. It carries out the reaction pretRNA = a 3'-half-tRNA molecule with a 5'-OH end + a 5'-half-tRNA molecule with a 2',3'-cyclic phosphate end + an intron with a 2',3'-cyclic phosphate and a 5'-hydroxyl terminus.. Functionally, constitutes one of the two catalytic subunit of the tRNA-splicing endonuclease complex, a complex responsible for identification and cleavage of the splice sites in pre-tRNA. It cleaves pre-tRNA at the 5'- and 3'-splice sites to release the intron. The products are an intron and two tRNA half-molecules bearing 2',3'-cyclic phosphate and 5'-OH termini. There are no conserved sequences at the splice sites, but the intron is invariably located at the same site in the gene, placing the splice sites an invariant distance from the constant structural features of the tRNA body. Probably carries the active site for 5'-splice site cleavage. This Oryza sativa subsp. japonica (Rice) protein is Probable tRNA-splicing endonuclease subunit Sen2.